Reading from the N-terminus, the 150-residue chain is Large ribosomal subunit protein bL9 (150 aa).

This sequence belongs to the bacterial ribosomal protein bL9 family.

Binds to the 23S rRNA. The protein is Large ribosomal subunit protein bL9 of Albidiferax ferrireducens (strain ATCC BAA-621 / DSM 15236 / T118) (Rhodoferax ferrireducens).